Consider the following 117-residue polypeptide: DNA-directed RNA polymerase subunit omega (117 aa).

It belongs to the RNA polymerase subunit omega family. In terms of assembly, the RNAP catalytic core consists of 2 alpha, 1 beta, 1 beta' and 1 omega subunit. When a sigma factor is associated with the core the holoenzyme is formed, which can initiate transcription.

The enzyme catalyses RNA(n) + a ribonucleoside 5'-triphosphate = RNA(n+1) + diphosphate. Promotes RNA polymerase assembly. Latches the N- and C-terminal regions of the beta' subunit thereby facilitating its interaction with the beta and alpha subunits. In Cereibacter sphaeroides (strain ATCC 17025 / ATH 2.4.3) (Rhodobacter sphaeroides), this protein is DNA-directed RNA polymerase subunit omega.